Reading from the N-terminus, the 317-residue chain is 3-oxoacyl-[acyl-carrier-protein] reductase 5, chloroplastic (317 aa).

A chloroplast-targeting transit peptide spans 1-57 (TTVAATKLTSLKATAGKLGYREICQVRQWAPLKSAMPHFGMLRCATSTVVKAQAQAQ). 79–103 (VTGASRGIGKAIALSLGKAGCKVLV) contacts NADP(+). Position 211 (serine 211) interacts with substrate. The Proton acceptor role is filled by tyrosine 224.

This sequence belongs to the short-chain dehydrogenases/reductases (SDR) family. In terms of assembly, homotetramer.

The protein localises to the plastid. The protein resides in the chloroplast. It carries out the reaction a (3R)-hydroxyacyl-[ACP] + NADP(+) = a 3-oxoacyl-[ACP] + NADPH + H(+). It participates in lipid metabolism; fatty acid biosynthesis. The sequence is that of 3-oxoacyl-[acyl-carrier-protein] reductase 5, chloroplastic (bkr1) from Brassica napus (Rape).